We begin with the raw amino-acid sequence, 271 residues long: 5'-nucleotidase SurE (271 aa).

Residues Asp14, Asp15, Ser46, and Asn104 each coordinate a divalent metal cation.

This sequence belongs to the SurE nucleotidase family. Requires a divalent metal cation as cofactor.

It is found in the cytoplasm. It carries out the reaction a ribonucleoside 5'-phosphate + H2O = a ribonucleoside + phosphate. Functionally, nucleotidase that shows phosphatase activity on nucleoside 5'-monophosphates. The polypeptide is 5'-nucleotidase SurE (Gloeothece citriformis (strain PCC 7424) (Cyanothece sp. (strain PCC 7424))).